The chain runs to 745 residues: Copper-transporting ATPase (745 aa).

Positions 1–67 (MKESFYIEGM…LIEKLGYSPK (67 aa)) constitute an HMA domain. The Cytoplasmic segment spans residues 1-83 (MKESFYIEGM…KKEFFSPNVK (83 aa)). 2 residues coordinate Cu cation: cysteine 12 and cysteine 15. A helical transmembrane segment spans residues 84-104 (LALAVIFTLFVVYLSMGAMLS). The Extracellular segment spans residues 105–124 (PSLLPKSLLAIDNHSNFLNA). The chain crosses the membrane as a helical span at residues 125-144 (CLQLIGTLIVMHWGRDFYIQ). The Cytoplasmic portion of the chain corresponds to 145–151 (GFKALWH). The chain crosses the membrane as a helical span at residues 152–172 (RQPNMSSLIAIGTSAALISSL). Residues 173 to 194 (WQLYLVYTDHYTDQWSYGHYYF) lie on the Extracellular side of the membrane. Residues 195–215 (ESVCVILMFVMVGKRIENVSK) traverse the membrane as a helical segment. Over 216–343 (DKALDAMQAL…KAEISRLADK (128 aa)) the chain is Cytoplasmic. A helical membrane pass occupies residues 344–366 (VSSVFVPSVIAIAILAFVVWLII). The Extracellular segment spans residues 367 to 379 (APKPDFWWNFGIA). A helical transmembrane segment spans residues 380–397 (LEVFVSVLVISCPCALGL). The Cytoplasmic segment spans residues 398–685 (ATLMSILVAN…KLSQATIKNI (288 aa)). The active-site 4-aspartylphosphate intermediate is the aspartate 435. Positions 631 and 635 each coordinate Mg(2+). Residues 686–705 (KENLFWAFCYNSVFIPLACG) form a helical membrane-spanning segment. The Extracellular portion of the chain corresponds to 706–716 (VLYKANIMLSP). Residues 717 to 735 (AIAGLAMSLSSVSVVLNSQ) form a helical membrane-spanning segment. Over 736–745 (RLRNFKIKDH) the chain is Cytoplasmic.

It belongs to the cation transport ATPase (P-type) (TC 3.A.3) family. Type IB subfamily.

The protein resides in the cell membrane. The catalysed reaction is Cu(2+)(in) + ATP + H2O = Cu(2+)(out) + ADP + phosphate + H(+). Its function is as follows. Probably involved in copper export. This is Copper-transporting ATPase (copA) from Helicobacter pylori (Campylobacter pylori).